The chain runs to 748 residues: Methylmalonyl-CoA mutase, mitochondrial (748 aa).

A mitochondrion-targeting transit peptide spans 1–30 (MLRAKNQLFLLSPHYLKQLNIPSASRWKRL). Q48 contributes to the malonyl-CoA binding site. The residue at position 87 (K87) is an N6-acetyllysine. Residues 94–97 (YPTM) and 104–108 (TIRQY) contribute to the malonyl-CoA site. K210 carries the N6-acetyllysine modification. Residues 214-216 (TIQ), R226, K253, H263, and 302-304 (RLS) contribute to the malonyl-CoA site. K333 carries the N6-acetyllysine modification. The residue at position 341 (K341) is an N6-succinyllysine. S479 carries the phosphoserine modification. Position 593 is an N6-succinyllysine (K593). K600 is subject to N6-acetyllysine. Positions 612–744 (RPRLLVAKMG…DDIEKCLAEK (133 aa)) constitute a B12-binding domain. H625 serves as a coordination point for adenosylcob(III)alamin.

It belongs to the methylmalonyl-CoA mutase family. Homodimer. Interacts (the apoenzyme form) with MMAA; the interaction is GTP dependent. The cofactor is adenosylcob(III)alamin.

Its subcellular location is the mitochondrion matrix. It is found in the mitochondrion. The protein resides in the cytoplasm. It carries out the reaction (R)-methylmalonyl-CoA = succinyl-CoA. Inhibited by itaconyl-CoA, a metabolite that inactivates the coenzyme B12 cofactor. Catalyzes the reversible isomerization of methylmalonyl-CoA (MMCoA) (generated from branched-chain amino acid metabolism and degradation of dietary odd chain fatty acids and cholesterol) to succinyl-CoA (3-carboxypropionyl-CoA), a key intermediate of the tricarboxylic acid cycle. The sequence is that of Methylmalonyl-CoA mutase, mitochondrial (Mmut) from Mus musculus (Mouse).